The sequence spans 356 residues: Ribosomal RNA large subunit methyltransferase M (356 aa).

Residues Ser187, 220-223 (CPGG), Asp239, Asp259, and Asp276 contribute to the S-adenosyl-L-methionine site. Catalysis depends on Lys305, which acts as the Proton acceptor.

This sequence belongs to the class I-like SAM-binding methyltransferase superfamily. RNA methyltransferase RlmE family. RlmM subfamily. As to quaternary structure, monomer.

The protein resides in the cytoplasm. The catalysed reaction is cytidine(2498) in 23S rRNA + S-adenosyl-L-methionine = 2'-O-methylcytidine(2498) in 23S rRNA + S-adenosyl-L-homocysteine + H(+). Functionally, catalyzes the 2'-O-methylation at nucleotide C2498 in 23S rRNA. The sequence is that of Ribosomal RNA large subunit methyltransferase M from Pseudoalteromonas atlantica (strain T6c / ATCC BAA-1087).